A 552-amino-acid chain; its full sequence is Glutamine-dependent NAD(+) synthetase (552 aa).

Positions 5-245 (FRITLAQLNP…EAVVHVDLER (241 aa)) constitute a CN hydrolase domain. The active-site Proton acceptor; for glutaminase activity is Glu-45. Catalysis depends on Lys-113, which acts as the For glutaminase activity. Cys-149 functions as the Nucleophile; for glutaminase activity in the catalytic mechanism. Positions 175 and 181 each coordinate L-glutamine. The tract at residues 275-552 (LQDYLRKSGF…PMVNRWRDQS (278 aa)) is ligase. 290–297 (GLSGGIDS) contacts ATP. Asn-373 contacts deamido-NAD(+). Thr-397 lines the ATP pocket. Residues Glu-402 and Lys-521 each contribute to the deamido-NAD(+) site.

The protein in the C-terminal section; belongs to the NAD synthetase family.

The catalysed reaction is deamido-NAD(+) + L-glutamine + ATP + H2O = L-glutamate + AMP + diphosphate + NAD(+) + H(+). The protein operates within cofactor biosynthesis; NAD(+) biosynthesis; NAD(+) from deamido-NAD(+) (L-Gln route): step 1/1. Its function is as follows. Catalyzes the ATP-dependent amidation of deamido-NAD to form NAD. Uses L-glutamine as a nitrogen source. The sequence is that of Glutamine-dependent NAD(+) synthetase from Rhodobacter capsulatus (Rhodopseudomonas capsulata).